Here is a 211-residue protein sequence, read N- to C-terminus: Probable cytokinin riboside 5'-monophosphate phosphoribohydrolase LOGL3 (211 aa).

Substrate is bound by residues E84, 102 to 103, 119 to 125, and T131; these read RK and GYGTLEE.

This sequence belongs to the LOG family. In terms of tissue distribution, expressed in roots, leaves, stems, tiller buds, shoot apex, immature inflorescences and flowers.

It catalyses the reaction N(6)-(dimethylallyl)adenosine 5'-phosphate + H2O = N(6)-dimethylallyladenine + D-ribose 5-phosphate. The catalysed reaction is 9-ribosyl-trans-zeatin 5'-phosphate + H2O = trans-zeatin + D-ribose 5-phosphate. In terms of biological role, cytokinin-activating enzyme working in the direct activation pathway. Phosphoribohydrolase that converts inactive cytokinin nucleotides to the biologically active free-base forms. The sequence is that of Probable cytokinin riboside 5'-monophosphate phosphoribohydrolase LOGL3 (LOGL3) from Oryza sativa subsp. japonica (Rice).